A 146-amino-acid polypeptide reads, in one-letter code: uncharacterized protein (146 aa).

In terms of domain architecture, HTH marR-type spans 1–137 (MLSQEFFNSF…TINVMNQIHE (137 aa)).

This is an uncharacterized protein from Staphylococcus aureus (strain MRSA252).